The sequence spans 237 residues: MQKQAELYRGKAKTVYSTENPDLLVLEFRNDTSAGDGARIEQFDRKGMVNNKFNHFIMTKLAEAGIPTQMERLLSDTECLVKKLEMVPVECVVRNRAAGSLVKRLGVEEGMELNPPIFDLFLKNDALHDPMVNSSYCETFGWVSQENLARMKELTYKANDVLKKLFDDAGLILVDFKLEFGLYKGEVVLGDEFSPDGSRLWDKETLDKMDKDRFRQSLGGLIEAYEAVAHRLGVKLD.

The protein belongs to the SAICAR synthetase family.

The enzyme catalyses 5-amino-1-(5-phospho-D-ribosyl)imidazole-4-carboxylate + L-aspartate + ATP = (2S)-2-[5-amino-1-(5-phospho-beta-D-ribosyl)imidazole-4-carboxamido]succinate + ADP + phosphate + 2 H(+). It participates in purine metabolism; IMP biosynthesis via de novo pathway; 5-amino-1-(5-phospho-D-ribosyl)imidazole-4-carboxamide from 5-amino-1-(5-phospho-D-ribosyl)imidazole-4-carboxylate: step 1/2. This Salmonella agona (strain SL483) protein is Phosphoribosylaminoimidazole-succinocarboxamide synthase.